An 82-amino-acid polypeptide reads, in one-letter code: Large ribosomal subunit protein uL23 (82 aa).

It belongs to the universal ribosomal protein uL23 family. Part of the 50S ribosomal subunit. Contacts protein L29.

Functionally, binds to 23S rRNA. One of the proteins that surrounds the polypeptide exit tunnel on the outside of the ribosome. The protein is Large ribosomal subunit protein uL23 of Methanococcoides burtonii (strain DSM 6242 / NBRC 107633 / OCM 468 / ACE-M).